A 506-amino-acid polypeptide reads, in one-letter code: Protein NEN3 (506 aa).

In terms of domain architecture, Exonuclease spans 15–176 (FFDLETAVPT…LDDVRMNLEV (162 aa)). Mg(2+)-binding residues include aspartate 17 and glutamate 19. Histidine 164 serves as the catalytic Proton donor/acceptor. Aspartate 169 contributes to the Mg(2+) binding site. Disordered stretches follow at residues 204 to 240 (KSPR…SSVD) and 289 to 313 (AEEA…KDES). Residues 222–238 (SSTSSSSSPKTDPSSSS) show a composition bias toward low complexity. The segment covering 290 to 299 (EEAKTVRQQD) has biased composition (basic and acidic residues).

Requires Mg(2+) as cofactor.

Functionally, probable exonuclease that may be involved in enuclation of sieve elements. In Arabidopsis thaliana (Mouse-ear cress), this protein is Protein NEN3 (NEN3).